Reading from the N-terminus, the 77-residue chain is MSTKNRTRRTTTRNIRFPNQMIEQINIALEQKGSGNFSAWVIEACRRRLCSEKRVSSEANKEKSDITELLRKQVRPD.

Residues 53 to 77 (KRVSSEANKEKSDITELLRKQVRPD) are disordered.

This is an uncharacterized protein from Escherichia coli (strain K12).